The primary structure comprises 264 residues: MRTYLDLLQHVLDHGVDRDDRTGTGTRSAFGYQMRFDLEEGFPVLTTKKLHLRSIIHELLWFLKGDTNIAYLKENGVTIWDEWADENGDLGPVYGYQWRSWPAPDGRHIDQIANLLKMLHTNPQSRRLIVSAWNPALVDEMALPPCHCLFQFYVANGRLSCQLYQRSADIFLGVPFNIASYALLTMMIAQVTGLKPGEFIHTLGDAHIYSNHFEQARLQLTRTPKKLPVMHINPDVKDLFAFRFEDFRLDGYEADPTIKAPIAV.

R21 contacts dUMP. H51 contacts (6R)-5,10-methylene-5,6,7,8-tetrahydrofolate. DUMP is bound at residue 126–127 (RR). C146 serves as the catalytic Nucleophile. DUMP is bound by residues 166-169 (RSAD), N177, and 207-209 (HIY). D169 is a (6R)-5,10-methylene-5,6,7,8-tetrahydrofolate binding site. A263 is a binding site for (6R)-5,10-methylene-5,6,7,8-tetrahydrofolate.

It belongs to the thymidylate synthase family. Bacterial-type ThyA subfamily. Homodimer.

It localises to the cytoplasm. The enzyme catalyses dUMP + (6R)-5,10-methylene-5,6,7,8-tetrahydrofolate = 7,8-dihydrofolate + dTMP. It functions in the pathway pyrimidine metabolism; dTTP biosynthesis. Its function is as follows. Catalyzes the reductive methylation of 2'-deoxyuridine-5'-monophosphate (dUMP) to 2'-deoxythymidine-5'-monophosphate (dTMP) while utilizing 5,10-methylenetetrahydrofolate (mTHF) as the methyl donor and reductant in the reaction, yielding dihydrofolate (DHF) as a by-product. This enzymatic reaction provides an intracellular de novo source of dTMP, an essential precursor for DNA biosynthesis. This chain is Thymidylate synthase, found in Brucella ovis (strain ATCC 25840 / 63/290 / NCTC 10512).